A 34-amino-acid polypeptide reads, in one-letter code: Photosystem II reaction center protein M (34 aa).

A helical membrane pass occupies residues 7 to 27; the sequence is GFVASLMFILVPAIFLIVLYI.

This sequence belongs to the PsbM family. In terms of assembly, PSII is composed of 1 copy each of membrane proteins PsbA, PsbB, PsbC, PsbD, PsbE, PsbF, PsbH, PsbI, PsbJ, PsbK, PsbL, PsbM, PsbT, PsbX, PsbY, PsbZ, Psb30/Ycf12, peripheral proteins PsbO, CyanoQ (PsbQ), PsbU, PsbV and a large number of cofactors. It forms dimeric complexes.

Its subcellular location is the cellular thylakoid membrane. One of the components of the core complex of photosystem II (PSII). PSII is a light-driven water:plastoquinone oxidoreductase that uses light energy to abstract electrons from H(2)O, generating O(2) and a proton gradient subsequently used for ATP formation. It consists of a core antenna complex that captures photons, and an electron transfer chain that converts photonic excitation into a charge separation. This subunit is found at the monomer-monomer interface. This chain is Photosystem II reaction center protein M, found in Synechococcus sp. (strain CC9605).